Reading from the N-terminus, the 212-residue chain is Putative tyrosine-protein phosphatase R622 (212 aa).

The 183-residue stretch at 9–191 folds into the Tyrosine-protein phosphatase domain; sequence KISQVTNNIF…LQGYQSKKEN (183 aa). The active-site Phosphocysteine intermediate is the C135.

Belongs to the protein-tyrosine phosphatase family. Non-receptor class dual specificity subfamily.

The enzyme catalyses O-phospho-L-tyrosyl-[protein] + H2O = L-tyrosyl-[protein] + phosphate. This is Putative tyrosine-protein phosphatase R622 from Acanthamoeba polyphaga mimivirus (APMV).